The sequence spans 191 residues: Guanylate kinase (191 aa).

The Guanylate kinase-like domain maps to 8–188 (GRLVVLAGPS…AVSDIKEILV (181 aa)). 15–22 (GPSAVGKS) provides a ligand contact to ATP.

The protein belongs to the guanylate kinase family.

Its subcellular location is the cytoplasm. It catalyses the reaction GMP + ATP = GDP + ADP. In terms of biological role, essential for recycling GMP and indirectly, cGMP. In Corynebacterium diphtheriae (strain ATCC 700971 / NCTC 13129 / Biotype gravis), this protein is Guanylate kinase.